The chain runs to 349 residues: Phenylalanine--tRNA ligase alpha subunit (349 aa).

Position 259 (Glu-259) interacts with Mg(2+).

Belongs to the class-II aminoacyl-tRNA synthetase family. Phe-tRNA synthetase alpha subunit type 1 subfamily. In terms of assembly, tetramer of two alpha and two beta subunits. The cofactor is Mg(2+).

It localises to the cytoplasm. It carries out the reaction tRNA(Phe) + L-phenylalanine + ATP = L-phenylalanyl-tRNA(Phe) + AMP + diphosphate + H(+). The sequence is that of Phenylalanine--tRNA ligase alpha subunit from Lactobacillus johnsonii (strain CNCM I-12250 / La1 / NCC 533).